Consider the following 154-residue polypeptide: Myoglobin (154 aa).

One can recognise a Globin domain in the interval 2–148 (GLSDGEWQLV…FRNDIAAKYK (147 aa)). Ser4 carries the post-translational modification Phosphoserine. Residue His65 coordinates nitrite. Residue His65 participates in O2 binding. Thr68 is subject to Phosphothreonine. Residue His94 coordinates heme b.

The protein belongs to the globin family. As to quaternary structure, monomeric.

It localises to the cytoplasm. It is found in the sarcoplasm. The catalysed reaction is Fe(III)-heme b-[protein] + nitric oxide + H2O = Fe(II)-heme b-[protein] + nitrite + 2 H(+). It catalyses the reaction H2O2 + AH2 = A + 2 H2O. In terms of biological role, monomeric heme protein which primary function is to store oxygen and facilitate its diffusion within muscle tissues. Reversibly binds oxygen through a pentacoordinated heme iron and enables its timely and efficient release as needed during periods of heightened demand. Depending on the oxidative conditions of tissues and cells, and in addition to its ability to bind oxygen, it also has a nitrite reductase activity whereby it regulates the production of bioactive nitric oxide. Under stress conditions, like hypoxia and anoxia, it also protects cells against reactive oxygen species thanks to its pseudoperoxidase activity. This Spalax ehrenbergi (Middle East blind mole rat) protein is Myoglobin (MB).